Here is a 364-residue protein sequence, read N- to C-terminus: MASCGEVNLTVDSLTSGKKVSGEAVPEGSGSPSSPSLPVPECPICLQSCVHPVRLPCRHIFCFLCVKGASWHSKRCALCRREVPEDFLERPTLLSPEELKASATGGCGTGSSGHAWYYEGRNGWWQYDERTSRELEDAFSKGKKSAEMLIAGFLYVADLENMVQYRRNEHGRRRRMKRDVVDIPKKGVAGLRLDPDPNSSAGAVPAPAVVDVSVDGAAAERESSADGADTGVSGGRPQGTFVPAPIRPPTILGGHLTSPASSSDIQLVQTLAQLNISPNEQEPEEEDAEDEDDSAAPDASGYDSESGTSDDDEQVEDEDENEHTDGSQGKHRLQQLNRPPPGGGPANSGDRSGCPDGQCTVTKV.

Positions 18 to 37 (KKVSGEAVPEGSGSPSSPSL) are disordered. The segment covering 22-34 (GEAVPEGSGSPSS) has biased composition (low complexity). The segment at 42-80 (CPICLQSCVHPVRLPCRHIFCFLCVKGASWHSKRCALCR) adopts an RING-type zinc-finger fold. The WWE domain occupies 102-178 (SATGGCGTGS…EHGRRRRMKR (77 aa)). A glycoprotein is bound by residues Y118, R121, W125, Y155, Q164, R174, and K186. Disordered regions lie at residues 217 to 262 (AAAE…PASS) and 279 to 364 (NEQE…VTKV). Acidic residues-rich tracts occupy residues 281–295 (QEPE…DDSA) and 308–322 (TSDD…DENE).

The protein resides in the cytoplasm. Its subcellular location is the cytosol. It localises to the nucleus. It carries out the reaction S-ubiquitinyl-[E2 ubiquitin-conjugating enzyme]-L-cysteine + [acceptor protein]-L-lysine = [E2 ubiquitin-conjugating enzyme]-L-cysteine + N(6)-ubiquitinyl-[acceptor protein]-L-lysine.. The protein operates within protein modification; protein ubiquitination. E3 ubiquitin-protein ligase that specifically binds poly-ADP-ribosylated proteins and mediates their ubiquitination and subsequent degradation. May regulate many important biological processes, such as cell survival and DNA damage response. Acts as an activator of the Wnt signaling pathway by mediating the ubiquitination of poly-ADP-ribosylated proteins. Neuroprotective protein. Protects against cell death induced by DNA damaging agents and rescues cells from G1 arrest. Promotes cell survival after gamma-irradiation. Facilitates DNA repair. The protein is E3 ubiquitin-protein ligase rnf146 (rnf146) of Danio rerio (Zebrafish).